The sequence spans 260 residues: uncharacterized protein (260 aa).

Helical transmembrane passes span 39 to 59, 68 to 88, 111 to 131, 159 to 179, 193 to 213, and 214 to 234; these read IFYLLFIPLSKNFIYTDLIEA, IIVGIYLSYPIFLYQIWSFLI, FLGSCIGYYLLFPIAFTFFLG, LIFSLSICFQLPVLILFLFKI, FIYLFFFILAAILSPPDILSQ, and FILVIPLILFFEISLFCIKLI.

It belongs to the TatC family.

Its subcellular location is the mitochondrion membrane. This is an uncharacterized protein from Reclinomonas americana.